The following is a 95-amino-acid chain: Acylphosphatase (95 aa).

Residues 5–93 (RAHLFIRGKV…GEFQDFRILP (89 aa)) form the Acylphosphatase-like domain. Residues Arg20 and Asn38 contribute to the active site.

It belongs to the acylphosphatase family.

The catalysed reaction is an acyl phosphate + H2O = a carboxylate + phosphate + H(+). In Pyrobaculum arsenaticum (strain DSM 13514 / JCM 11321 / PZ6), this protein is Acylphosphatase (acyP).